The sequence spans 198 residues: MAEKQTAKRNRREEILQSLAQMLESSDGSQRITTAKLAASVGVSEAALYRHFPSKTRMFDSLIEFIEDSLITRINLILKDEKETLNRLRLIVLLILGFGERNPGLTRILTGHALMFEQDRLQGRINQLFERIEAQLRQVLREKKMREGEGYATDEALLASQLLAFCEGMLSRFVRSEFRYSPTADFEARWPLLAAQLQ.

One can recognise an HTH tetR-type domain in the interval 9–70; it reads RNRREEILQS…SLIEFIEDSL (62 aa). The segment at residues 33–52 is a DNA-binding region (H-T-H motif); it reads TTAKLAASVGVSEAALYRHF. Positions 117-145 form a coiled coil; it reads EQDRLQGRINQLFERIEAQLRQVLREKKM.

It belongs to the nucleoid occlusion factor SlmA family. Homodimer. Interacts with FtsZ.

Its subcellular location is the cytoplasm. It is found in the nucleoid. Functionally, required for nucleoid occlusion (NO) phenomenon, which prevents Z-ring formation and cell division over the nucleoid. Acts as a DNA-associated cell division inhibitor that binds simultaneously chromosomal DNA and FtsZ, and disrupts the assembly of FtsZ polymers. SlmA-DNA-binding sequences (SBS) are dispersed on non-Ter regions of the chromosome, preventing FtsZ polymerization at these regions. The sequence is that of Nucleoid occlusion factor SlmA from Cronobacter sakazakii (strain ATCC BAA-894) (Enterobacter sakazakii).